The sequence spans 72 residues: MAEIKKGSLVRVVREKLENSLEAKASDNRFPAYIFESQGEIVDTRGDYAFIKFGKVPTPNIWLRLDQLEKFE.

The protein belongs to the complex I NdhO subunit family. NDH-1 can be composed of about 15 different subunits; different subcomplexes with different compositions have been identified which probably have different functions.

The protein localises to the cellular thylakoid membrane. It carries out the reaction a plastoquinone + NADH + (n+1) H(+)(in) = a plastoquinol + NAD(+) + n H(+)(out). It catalyses the reaction a plastoquinone + NADPH + (n+1) H(+)(in) = a plastoquinol + NADP(+) + n H(+)(out). Its function is as follows. NDH-1 shuttles electrons from an unknown electron donor, via FMN and iron-sulfur (Fe-S) centers, to quinones in the respiratory and/or the photosynthetic chain. The immediate electron acceptor for the enzyme in this species is believed to be plastoquinone. Couples the redox reaction to proton translocation, and thus conserves the redox energy in a proton gradient. Cyanobacterial NDH-1 also plays a role in inorganic carbon-concentration. This is NAD(P)H-quinone oxidoreductase subunit O from Trichodesmium erythraeum (strain IMS101).